A 558-amino-acid chain; its full sequence is Oligo-1,6-glucosidase (558 aa).

Ca(2+)-binding residues include D21, N23, D25, and D29. The active-site Nucleophile is the D199. Catalysis depends on E255, which acts as the Proton donor.

Belongs to the glycosyl hydrolase 13 family.

It is found in the cytoplasm. It carries out the reaction Hydrolysis of (1-&gt;6)-alpha-D-glucosidic linkages in some oligosaccharides produced from starch and glycogen by alpha-amylase, and in isomaltose.. The chain is Oligo-1,6-glucosidase (malL) from Bacillus cereus.